Here is a 523-residue protein sequence, read N- to C-terminus: Cryptochrome DASH (523 aa).

The region spanning 6-142 is the Photolyase/cryptochrome alpha/beta domain; that stretch reads RVIICLLRND…KYQTFWGSTL (137 aa). Disordered regions lie at residues 174 to 211 and 486 to 523; these read RPTF…TDPR and KPAG…NKDV. Residues 496 to 510 show a composition bias toward basic residues; it reads RRGKGPSHTPKQHKN.

This sequence belongs to the DNA photolyase class-1 family. FAD is required as a cofactor. It depends on (6R)-5,10-methylene-5,6,7,8-tetrahydrofolate as a cofactor.

Functionally, may have a photoreceptor function. Has weak cyclobutyl pyrimidine photolyase activity when expressed in E.coli and when tested in vitro. This Xenopus laevis (African clawed frog) protein is Cryptochrome DASH (cry-dash).